Here is a 377-residue protein sequence, read N- to C-terminus: DNA dC-&gt;dU-editing enzyme APOBEC-3G (377 aa).

Residues 1–60 (MNPQIRNMVEQMEPDIFVYYFNNRPILSGRNTVWLCYEVKTKDPSGPPLDANIFQGKLYP) are essential for cytoplasmic localization. CMP/dCMP-type deaminase domains are found at residues 29 to 138 (GRNT…LRIL) and 214 to 327 (GQRE…LRTL). Thr32 carries the post-translational modification Phosphothreonine; by PKA. Zn(2+) is bound by residues His65, Cys97, and Cys100. The interval 209 to 335 (KPWVSGQRET…TLHRDGAKIA (127 aa)) is necessary for homooligomerization. An interaction with DNA region spans residues 213–215 (SGQ). The residue at position 218 (Thr218) is a Phosphothreonine; by PKA and CAMK2. Residue His257 participates in Zn(2+) binding. The active-site Proton donor is the Glu259. Zn(2+) contacts are provided by Cys287 and Cys290. The segment at 312-319 (RIYDDQGR) is interaction with DNA.

The protein belongs to the cytidine and deoxycytidylate deaminase family. As to quaternary structure, homodimer. Homooligomer. Can bind RNA to form ribonucleoprotein complexes of high-molecular-mass (HMM) or low-molecular-mass (LMM). HMM is inactive and heterogeneous in protein composition because of binding nonselectively to cellular RNAs, which in turn are associated with variety of cellular proteins. The LMM form which is enzymatically active has few or no RNAs associated. Its ability to form homooligomer is distinct from its ability to assemble into HMM. Interacts with APOBEC3B, APOBEC3F, MOV10, AGO2, EIF4E, EIF4ENIF1, DCP2 and DDX6 in an RNA-dependent manner. Interacts with AGO1, AGO3 and PKA/PRKACA. Requires Zn(2+) as cofactor.

Its subcellular location is the cytoplasm. It is found in the nucleus. It localises to the P-body. The catalysed reaction is a 2'-deoxycytidine in single-stranded DNA + H2O + H(+) = a 2'-deoxyuridine in single-stranded DNA + NH4(+). DNA deaminase (cytidine deaminase) which acts as an inhibitor of retrovirus replication and retrotransposon mobility via deaminase-dependent and -independent mechanisms. Exhibits antiviral activity against vif-deficient: HIV-1 and simian immunodeficiency viruses (SIVs) and also simian foamy virus (SFV). After the penetration of retroviral nucleocapsids into target cells of infection and the initiation of reverse transcription, it can induce the conversion of cytosine to uracil in the minus-sense single-strand viral DNA, leading to G-to-A hypermutations in the subsequent plus-strand viral DNA. The resultant detrimental levels of mutations in the proviral genome, along with a deamination-independent mechanism that works prior to the proviral integration, together exert efficient antiretroviral effects in infected target cells. Selectively targets single-stranded DNA and does not deaminate double-stranded DNA or single- or double-stranded RNA. May inhibit the mobility of LTR retrotransposons. This is DNA dC-&gt;dU-editing enzyme APOBEC-3G (APOBEC3G) from Chlorocebus aethiops (Green monkey).